The chain runs to 604 residues: Prostaglandin G/H synthase 2 (604 aa).

The signal sequence occupies residues 1 to 17 (MLARALLLCAALALGQA). The EGF-like domain maps to 18–55 (ANPCCSNPCQNRGECLSVGFDRYKCDCTRTGYYGENCT). 4 disulfide bridges follow: C21-C32, C22-C145, C26-C42, and C44-C54. Residue N53 is glycosylated (N-linked (GlcNAc...) asparagine). R106 is a binding site for substrate. An N-linked (GlcNAc...) asparagine glycan is attached at N130. The active-site Proton acceptor is H193. Y341 contacts substrate. Y371 serves as the catalytic For cyclooxygenase activity. Residue H374 participates in heme b binding. N-linked (GlcNAc...) asparagine glycosylation occurs at N396. C526 carries the S-nitrosocysteine modification. A disulfide bridge connects residues C555 and C561. N580 carries an N-linked (GlcNAc...) asparagine glycan.

It belongs to the prostaglandin G/H synthase family. Homodimer. Heme b serves as cofactor. In terms of processing, S-nitrosylation by NOS2 (iNOS) activates enzyme activity. S-nitrosylation may take place on different Cys residues in addition to Cys-526.

The protein resides in the microsome membrane. Its subcellular location is the endoplasmic reticulum membrane. The protein localises to the nucleus inner membrane. It localises to the nucleus outer membrane. It catalyses the reaction (5Z,8Z,11Z,14Z)-eicosatetraenoate + AH2 + 2 O2 = prostaglandin H2 + A + H2O. It carries out the reaction (5Z,8Z,11Z,14Z)-eicosatetraenoate + 2 O2 = prostaglandin G2. The enzyme catalyses prostaglandin G2 + AH2 = prostaglandin H2 + A + H2O. The catalysed reaction is (5Z,8Z,11Z,14Z,17Z)-eicosapentaenoate + 2 O2 = prostaglandin G3. It catalyses the reaction prostaglandin G3 + AH2 = prostaglandin H3 + A + H2O. It carries out the reaction (8Z,11Z,14Z)-eicosatrienoate + 2 O2 = prostaglandin G1. The enzyme catalyses prostaglandin G1 + AH2 = prostaglandin H1 + A + H2O. The catalysed reaction is 2-(5Z,8Z,11Z,14Z)-eicosatetraenoyl-sn-glycero-3-phosphoethanolamine + 2 O2 = 2-(prostaglandin G2)-sn-glycero-3-phosphoethanolamine. It catalyses the reaction 2-(prostaglandin G2)-sn-glycero-3-phosphoethanolamine + AH2 = 2-(prostaglandin H2)-sn-glycero-3-phosphoethanolamine + A + H2O. It carries out the reaction 2-(5Z,8Z,11Z,14Z)-eicosatetraenoyl-sn-glycero-3-phosphocholine + 2 O2 = 2-(prostaglandin G2)-sn-glycero-3-phosphocholine. The enzyme catalyses 2-(prostaglandin G2)-sn-glycero-3-phosphocholine + AH2 = 2-(prostaglandin H2)-sn-glycero-3-phosphocholine + A + H2O. The catalysed reaction is (15S)-hydroperoxy-(5Z,8Z,11Z,13E)-eicosatetraenoate + AH2 = (15S)-hydroxy-(5Z,8Z,11Z,13E)-eicosatetraenoate + A + H2O. It catalyses the reaction 2-(5Z,8Z,11Z,14Z)-eicosatetraenoyl-sn-glycero-3-phosphocholine + AH2 + O2 = 2-[(15S)-hydroxy-(5Z,8Z,11Z,13E)-eicosatetraenoyl]-sn-glycero-3-phosphocholine + A + H2O. It carries out the reaction 2-(5Z,8Z,11Z,14Z)-eicosatetraenoyl-sn-glycero-3-phosphocholine + AH2 + O2 = 2-[(15R)-hydroxy-(5Z,8Z,11Z,13E)-eicosatetraenoyl]-sn-glycero-3-phosphocholine + A + H2O. The enzyme catalyses 2-(5Z,8Z,11Z,14Z)-eicosatetraenoyl-sn-glycero-3-phosphocholine + AH2 + O2 = 2-[(11R)-hydroxy-(5Z,8Z,12E,14Z)-eicosatetraenoyl]-sn-glycero-3-phosphocholine + A + H2O. The catalysed reaction is (9Z,12Z)-octadecadienoate + AH2 + O2 = 9-hydroxy-(10E,12Z)-octadecadienoate + A + H2O. It catalyses the reaction (9Z,12Z)-octadecadienoate + AH2 + O2 = 13-hydroxy-(9Z,11E)-octadecadienoate + A + H2O. It carries out the reaction (5Z,8Z,11Z,14Z)-eicosatetraenoate + AH2 + O2 = (15R)-hydroxy-(5Z,8Z,11Z,13E)-eicosatetraenoate + A + H2O. The enzyme catalyses (5Z,8Z,11Z,14Z)-eicosatetraenoate + AH2 + O2 = (11R)-hydroxy-(5Z,8Z,12E,14Z)-eicosatetraenoate + A + H2O. The catalysed reaction is (5Z,8Z,11Z,14Z,17Z)-eicosapentaenoate + AH2 + O2 = (11R)-hydroxy-(5Z,8Z,12E,14Z,17Z)-eicosapentaenoate + A + H2O. It catalyses the reaction (5Z,8Z,11Z,14Z,17Z)-eicosapentaenoate + AH2 + O2 = (18S)-hydroxy-(5Z,8Z,11Z,14Z,16E)-eicosapentaenoate + A + H2O. It carries out the reaction (5Z,8Z,11Z,14Z,17Z)-eicosapentaenoate + AH2 + O2 = (18R)-hydroxy-(5Z,8Z,11Z,14Z,16E)-eicosapentaenoate + A + H2O. The enzyme catalyses (5Z,8Z,11Z,14Z,17Z)-eicosapentaenoate + AH2 + O2 = (15R)-hydroxy-(5Z,8Z,11Z,13E,17Z)-eicosapentaenoate + A + H2O. The catalysed reaction is (5Z,8Z,11Z,14Z,17Z)-eicosapentaenoate + AH2 + O2 = (15S)-hydroxy-(5Z,8Z,11Z,13E,17Z)-eicosapentaenoate + A + H2O. It catalyses the reaction (7Z,10Z,13Z,16Z,19Z)-docosapentaenoate + AH2 + O2 = 13R-hydroxy-(7Z,10Z,14E,16Z,19Z)-docosapentaenoate + A + H2O. It carries out the reaction (4Z,7Z,10Z,13Z,16Z,19Z)-docosahexaenoate + AH2 + O2 = 13-hydroxy-(4Z,7Z,10Z,14E,16Z,19Z)-docosahexaenoate + A + H2O. The enzyme catalyses (5S)-hydroxy-(6E,8Z,11Z,14Z)-eicosatetraenoate + AH2 + O2 = (5S,15R)-dihydroxy-(6E,8Z,11Z,13E)-eicosatetraenoate + A + H2O. The catalysed reaction is (4Z,7Z,10Z,13Z,16Z,19Z)-docosahexaenoate + AH2 + O2 = 17R-hydroxy-(4Z,7Z,10Z,13Z,15E,19Z)-docosahexaenoate + A + H2O. It catalyses the reaction (5S)-hydroxy-(6E,8Z,11Z,14Z)-eicosatetraenoate + AH2 + O2 = (5S,15S)-dihydroxy-(6E,8Z,11Z,13E)-eicosatetraenoate + A + H2O. It carries out the reaction (5S)-hydroxy-(6E,8Z,11Z,14Z)-eicosatetraenoate + AH2 + O2 = (5S,11R)-dihydroxy-(6E,8Z,12E,14Z)-eicosatetraenoate + A + H2O. The enzyme catalyses 2-(5Z,8Z,11Z,14Z-eicosatetraenoyl)-glycerol + 2 O2 = 2-glyceryl-prostaglandin G2. The catalysed reaction is 2-glyceryl-prostaglandin G2 + AH2 = 2-glyceryl-prostaglandin H2 + A + H2O. It catalyses the reaction (5Z,8Z,11Z,14Z)-eicosatetraenoate + O2 = (15R)-hydroperoxy-(5Z,8Z,11Z,13E)-eicosatetraenoate. It carries out the reaction (5Z,8Z,11Z,14Z)-eicosatetraenoate + O2 = 11R-hydroperoxy-(5Z,8Z,12E,14Z)-eicosatetraenoate. The enzyme catalyses (9Z,12Z)-octadecadienoate + AH2 + O2 = (9R)-hydroxy-(10E,12Z)-octadecadienoate + A + H2O. The catalysed reaction is (9Z,12Z)-octadecadienoate + AH2 + O2 = (9S)-hydroxy-(10E,12Z)-octadecadienoate + A + H2O. It catalyses the reaction (9Z,12Z)-octadecadienoate + AH2 + O2 = (13S)-hydroxy-(9Z,11E)-octadecadienoate + A + H2O. It carries out the reaction (9Z,12Z)-octadecadienoate + AH2 + O2 = (13R)-hydroxy-(9Z,11E)-octadecadienoate + A + H2O. Its pathway is lipid metabolism; prostaglandin biosynthesis. Its function is as follows. Dual cyclooxygenase and peroxidase in the biosynthesis pathway of prostanoids, a class of C20 oxylipins mainly derived from arachidonate ((5Z,8Z,11Z,14Z)-eicosatetraenoate, AA, C20:4(n-6)), with a particular role in the inflammatory response. The cyclooxygenase activity oxygenates AA to the hydroperoxy endoperoxide prostaglandin G2 (PGG2), and the peroxidase activity reduces PGG2 to the hydroxy endoperoxide prostaglandin H2 (PGH2), the precursor of all 2-series prostaglandins and thromboxanes. This complex transformation is initiated by abstraction of hydrogen at carbon 13 (with S-stereochemistry), followed by insertion of molecular O2 to form the endoperoxide bridge between carbon 9 and 11 that defines prostaglandins. The insertion of a second molecule of O2 (bis-oxygenase activity) yields a hydroperoxy group in PGG2 that is then reduced to PGH2 by two electrons. Similarly catalyzes successive cyclooxygenation and peroxidation of dihomo-gamma-linoleate (DGLA, C20:3(n-6)) and eicosapentaenoate (EPA, C20:5(n-3)) to corresponding PGH1 and PGH3, the precursors of 1- and 3-series prostaglandins. In an alternative pathway of prostanoid biosynthesis, converts 2-arachidonoyl lysophopholipids to prostanoid lysophopholipids, which are then hydrolyzed by intracellular phospholipases to release free prostanoids. Metabolizes 2-arachidonoyl glycerol yielding the glyceryl ester of PGH2, a process that can contribute to pain response. Generates lipid mediators from n-3 and n-6 polyunsaturated fatty acids (PUFAs) via a lipoxygenase-type mechanism. Oxygenates PUFAs to hydroperoxy compounds and then reduces them to corresponding alcohols. Plays a role in the generation of resolution phase interaction products (resolvins) during both sterile and infectious inflammation. Metabolizes docosahexaenoate (DHA, C22:6(n-3)) to 17R-HDHA, a precursor of the D-series resolvins (RvDs). As a component of the biosynthetic pathway of E-series resolvins (RvEs), converts eicosapentaenoate (EPA, C20:5(n-3)) primarily to 18S-HEPE that is further metabolized by ALOX5 and LTA4H to generate 18S-RvE1 and 18S-RvE2. In vascular endothelial cells, converts docosapentaenoate (DPA, C22:5(n-3)) to 13R-HDPA, a precursor for 13-series resolvins (RvTs) shown to activate macrophage phagocytosis during bacterial infection. In activated leukocytes, contributes to oxygenation of hydroxyeicosatetraenoates (HETE) to diHETES (5,15-diHETE and 5,11-diHETE). Can also use linoleate (LA, (9Z,12Z)-octadecadienoate, C18:2(n-6)) as substrate and produce hydroxyoctadecadienoates (HODEs) in a regio- and stereospecific manner, being (9R)-HODE ((9R)-hydroxy-(10E,12Z)-octadecadienoate) and (13S)-HODE ((13S)-hydroxy-(9Z,11E)-octadecadienoate) its major products. During neuroinflammation, plays a role in neuronal secretion of specialized preresolving mediators (SPMs) 15R-lipoxin A4 that regulates phagocytic microglia. The polypeptide is Prostaglandin G/H synthase 2 (PTGS2) (Cavia porcellus (Guinea pig)).